The chain runs to 121 residues: SLFELGKMILQETGKNPAKSYGAYGCNCGVLGRGKPKDATDRCCYVHKCCYKKLTGCNPKKDRYSYSWKDKTIVCGENNPCLKELCECDKAVAICLRENLGTYNKLYRYHLKPFCKKADDC.

7 cysteine pairs are disulfide-bonded: cysteine 26–cysteine 115, cysteine 28–cysteine 44, cysteine 43–cysteine 95, cysteine 49–cysteine 121, cysteine 50–cysteine 88, cysteine 57–cysteine 81, and cysteine 75–cysteine 86. The tract at residues 105–117 (KLYRYHLKPFCKK) is important for membrane-damaging activities in eukaryotes and bacteria; heparin-binding.

Belongs to the phospholipase A2 family. Group II subfamily. K49 sub-subfamily. Homodimer; non-covalently linked. As to expression, expressed by the venom gland.

The protein localises to the secreted. With respect to regulation, rosmarinic acid inhibits the myotoxic activity. Bromophenacyl bromide (BPB) inhibits the myotoxic activity through a covalent binding. Caffeic acid and aristolochic acid, two plant compounds used in folk medicine used to treat envenomation, inhibit the myotoxic activity. Its function is as follows. Snake venom phospholipase A2 (PLA2) homolog that lacks enzymatic activity. Is myotoxic and displays edema-inducing activities. Induces neuromuscular blockage. A model of myotoxic mechanism has been proposed: an apo Lys49-PLA2 is activated by the entrance of a hydrophobic molecule (e.g. fatty acid) at the hydrophobic channel of the protein leading to a reorientation of a monomer. This reorientation causes a transition between 'inactive' to 'active' states, causing alignment of C-terminal and membrane-docking sites (MDoS) side-by-side and putting the membrane-disruption sites (MDiS) in the same plane, exposed to solvent and in a symmetric position for both monomers. The MDoS region stabilizes the toxin on membrane by the interaction of charged residues with phospholipid head groups. Subsequently, the MDiS region destabilizes the membrane with penetration of hydrophobic residues. This insertion causes a disorganization of the membrane, allowing an uncontrolled influx of ions (i.e. calcium and sodium), and eventually triggering irreversible intracellular alterations and cell death. This Bothrops pirajai (Piraja's lancehead) protein is Basic phospholipase A2 homolog piratoxin-1.